Reading from the N-terminus, the 234-residue chain is Sugar fermentation stimulation protein A (234 aa).

The segment at residues 201–220 (LLSEAQNKGVEVLAYKAELS) is a DNA-binding region (H-T-H motif).

It belongs to the SfsA family.

Functionally, binds to DNA non-specifically. Could be a regulatory factor involved in maltose metabolism. The sequence is that of Sugar fermentation stimulation protein A from Salmonella gallinarum (strain 287/91 / NCTC 13346).